We begin with the raw amino-acid sequence, 1648 residues long: MSLHSTHNRNNSGDILDIPSSQNSSSLNALTHSSRLKLHLKSDMSECENDDPLLRSAGKVRDINRTYVISASRKTADMPLTPNPVGRLALQRRTTRNKESSLLVSELEDTTEKTAETRLTLQRRAKTDSAEKWKTAEIDSVKMTLNVGGETENNGVSKESRTNVRIVNNAKNSFVASSVPLDEDPQVIEMMADKKYKETFSAPSRANENVALKYSSNRPPIASLSQTEVVRSGHLTTKPTQSKLDIKVLGTGNLYHRSIGKEIAKTSNKFGSLEKRTPTKCTTEHKLTTKCSLPQLKSPAPSILKNRMSNLQVKQRPKSSFLANKQERSAENTILPEEETVVQNTSAGKDPLKVENSQVTVAVRVRPFTKREKIEKASQVVFMSGKEITVEHPDTKQVYNFIYDVSFWSFDECHPHYASQTTVYEKLAAPLLERAFEGFNTCLFAYGQTGSGKSYTMMGFSEEPGIIPRFCEDLFSQVARKQTQEVSYHIEMSFFEVYNEKIHDLLVCKDENGQRKQPLRVREHPVYGPYVEALSMNIVSSYADIQSWLELGNKQRATAATGMNDKSSRSHSVFTLVMTQTKTEFVEGEEHDHRITSRINLIDLAGSERCSTAHTNGDRLKEGVSINKSLLTLGKVISALSEQANQRSVFIPYRESVLTWLLKESLGGNSKTAMIATISPAASNIEETLSTLRYANQARLIVNIAKVNEDMNAKLIRELKAEIAKLKAAQRNSRNIDPERYRLCRQEITSLRMKLHQQERDMAEMQRVWKEKFEQAEKRKLQETKELQKAGIMFQMDNHLPNLVNLNEDPQLSEMLLYMIKEGTTTVGKYKPNSSHDIQLSGVLIADDHCTIKNFGGTVSIIPVGEAKTYVNGKHILEITVLRHGDRVILGGDHYFRFNHPVEVQKGKRPSGRDTPISEGPKDFEFAKNELLMAQRSQLEAEIKEAQLKAKEEMMQGIQIAKEMAQQELSSQKAAYESKIKALEAELREESQRKKMQEINNQKANHKIEELEKAKQHLEQEIYVNKKRLEMETLATKQALEDHSIRHARILEALETEKQKIAKEVQILQQNRNNRDKTFTVQTTWSSMKLSMMIQEANAISSKLKTYYVFGRHDISDKSSSDTSIRVRNLKLGISTFWSLEKFESKLAAMKELYESNGSNRGEDAFCDPEDEWEPDITDAPVSSLSRRRSRSLMKNRRISGCLHDIQVHPIKNLHSSHSSGLMDKSSTIYSNSAESFLPGICKELIGSSLDFFGQSYDEERTIADSLINSFLKIYNGLFAISKAHEEQDEESQDNLFSSDRAIQSLTIQTACAFEQLVVLMKHWLSDLLPCTNIARLEDELRQEVKKLGGYLQLFLQGCCLDISSMIKEAQKNAIQIVQQAVKYVGQLAVLKGSKLHFLENGNNKAASVQEEFMDAVCDGVGLGMKILLDSGLEKAKELQHELFRQCTKNEVTKEMKTNAMGLIRSLENIFAESKIKSFRRQVQEENFEYQDFKRMVNRAPEFLKLKHCLEKAIEIIISALKGCHSDINLLQTCVESIRNLASDFYSDFSVPSTSVGSYESRVTHIVHQELESLAKSLLFCFESEESPDLLKPWETYNQNTKEEHQQSKSSGIDGSKNKGVPKRVYELHGSSPAVSSEECTPSRIQWV.

Residues Met-1–Leu-27 are disordered. Positions Met-1–Asn-356 are required for PRC1-binding. Residues Ser-12 and Ser-272 each carry the phosphoserine modification. Thr-277 carries the post-translational modification Phosphothreonine. The residue at position 346 (Ser-346) is a Phosphoserine. A required for microtubule-binding with high affinity region spans residues Asn-356–Asp-737. The Kinesin motor domain maps to Gln-358–Ile-701. Gly-447 to Ser-454 lines the ATP pocket. Residues Ala-705–Gly-791 are a coiled coil. The FHA domain maps to Thr-825 to Gly-891. Residues Pro-901–Val-1648 form a required for CIT-binding region. At Thr-915 the chain carries Phosphothreonine. Positions Lys-922–Phe-1079 form a coiled coil. A phosphoserine mark is found at Ser-937 and Ser-1292. 2 coiled-coil regions span residues Thr-1332–Leu-1348 and Glu-1468–Ala-1500. The interval Asn-1600–Val-1648 is disordered. Residues Pro-1633–Val-1648 show a composition bias toward polar residues.

The protein belongs to the TRAFAC class myosin-kinesin ATPase superfamily. Kinesin family. As to quaternary structure, directly interacts with PRC1 within a complex also containing KIF4A, KIF20A and KIF23; targets to the central spindle. Directly interacts with CIT depending on the activation state of the kinase (stronger interaction with the kinase-dead form); targets to the midbody. Interacts with ARRB2; the interaction is detected in the nucleus upon OR1D2 stimulation. Interacts with AKT1; the interaction is detected in the plasma membrane upon INS stimulation and promotes AKT1 phosphorylation. Interacts with SVIL; at midbody during cytokinesis. Interacts with RADIL (via PDZ domain); recruits RADIL to the microtubule network restricting RADIL from interaction with activated RAP1A.

It localises to the nucleus. The protein resides in the cytoplasm. The protein localises to the cytoskeleton. It is found in the spindle. Its subcellular location is the midbody. In terms of biological role, microtubule motor protein that binds to microtubules with high affinity through each tubulin heterodimer and has an ATPase activity. Plays a role in many processes like cell division, cytokinesis and also in cell proliferation and apoptosis. During cytokinesis, targets to central spindle and midbody through its interaction with PRC1 and CIT respectively. Regulates cell growth through regulation of cell cycle progression and cytokinesis. During cell cycle progression acts through SCF-dependent proteasomal ubiquitin-dependent protein catabolic process which controls CDKN1B degradation, resulting in positive regulation of cyclins, including CCNE1, CCND1 and CCNB1. During late neurogenesis, regulates the cerebellar, cerebral cortex and olfactory bulb development through regulation of apoptosis, cell proliferation and cell division. Also is required for chromosome congression and alignment during mitotic cell cycle process. Regulates cell spreading, focal adhesion dynamics, and cell migration through its interaction with RADIL resulting in regulation of RAP1A-mediated inside-out integrin activation by tethering RADIL on microtubules. The sequence is that of Kinesin-like protein KIF14 from Homo sapiens (Human).